We begin with the raw amino-acid sequence, 338 residues long: Anthranilate phosphoribosyltransferase (338 aa).

5-phospho-alpha-D-ribose 1-diphosphate-binding positions include Gly78, 81–82, Thr86, 88–91, 106–114, and Ser118; these read GD, NIST, and KHGNRSVSS. Gly78 provides a ligand contact to anthranilate. Ser90 is a binding site for Mg(2+). Asn109 contributes to the anthranilate binding site. Arg164 contacts anthranilate. Residues Asp223 and Glu224 each contribute to the Mg(2+) site.

It belongs to the anthranilate phosphoribosyltransferase family. As to quaternary structure, homodimer. The cofactor is Mg(2+).

The enzyme catalyses N-(5-phospho-beta-D-ribosyl)anthranilate + diphosphate = 5-phospho-alpha-D-ribose 1-diphosphate + anthranilate. Its pathway is amino-acid biosynthesis; L-tryptophan biosynthesis; L-tryptophan from chorismate: step 2/5. Its function is as follows. Catalyzes the transfer of the phosphoribosyl group of 5-phosphorylribose-1-pyrophosphate (PRPP) to anthranilate to yield N-(5'-phosphoribosyl)-anthranilate (PRA). In Bacillus subtilis (strain 168), this protein is Anthranilate phosphoribosyltransferase.